The following is an 88-amino-acid chain: MALKERIGTVVSDKMDKTVVVAVINRYPHPTYKKIVSRTTRYKAHDPENTCVLGDRVKIRETRPLSAHKRWAIEEILNKTSQAKEVKK.

This sequence belongs to the universal ribosomal protein uS17 family. Part of the 30S ribosomal subunit.

Functionally, one of the primary rRNA binding proteins, it binds specifically to the 5'-end of 16S ribosomal RNA. The protein is Small ribosomal subunit protein uS17 of Prochlorococcus marinus (strain MIT 9301).